Reading from the N-terminus, the 172-residue chain is uncharacterized protein (172 aa).

The region spanning 3–171 (KKVAIILSNE…FNREIVKQLQ (169 aa)) is the PfpI endopeptidase domain.

This sequence belongs to the peptidase C56 family.

This is an uncharacterized protein from Staphylococcus haemolyticus (strain JCSC1435).